A 286-amino-acid chain; its full sequence is UPF0761 membrane protein KPN78578_41360 (286 aa).

A run of 7 helical transmembrane segments spans residues 44–64, 74–94, 104–124, 140–160, 183–203, 210–230, and 244–264; these read LLSLVPLIAVVFALFAAFPMF, FIFANFIPATGDVIQGYIEQF, VGAFGLIVTSLLLMYSIDSAL, FAVYWMILTLGPLLAGASLAI, LFPLILSWAAFWLLYSIVPTT, AVIGALVAALLFEAGKKAFAL, and VISVVPILFVWVYWTWCIVLL.

Belongs to the UPF0761 family.

It localises to the cell inner membrane. The polypeptide is UPF0761 membrane protein KPN78578_41360 (Klebsiella pneumoniae subsp. pneumoniae (strain ATCC 700721 / MGH 78578)).